A 310-amino-acid polypeptide reads, in one-letter code: Aspartate carbamoyltransferase catalytic subunit (310 aa).

Carbamoyl phosphate contacts are provided by Arg-58 and Thr-59. Lys-86 is an L-aspartate binding site. Residues Arg-108, His-137, and Gln-140 each coordinate carbamoyl phosphate. L-aspartate contacts are provided by Arg-170 and Arg-225. Gly-264 and Pro-265 together coordinate carbamoyl phosphate.

It belongs to the aspartate/ornithine carbamoyltransferase superfamily. ATCase family. Heterododecamer (2C3:3R2) of six catalytic PyrB chains organized as two trimers (C3), and six regulatory PyrI chains organized as three dimers (R2).

It carries out the reaction carbamoyl phosphate + L-aspartate = N-carbamoyl-L-aspartate + phosphate + H(+). It participates in pyrimidine metabolism; UMP biosynthesis via de novo pathway; (S)-dihydroorotate from bicarbonate: step 2/3. Its function is as follows. Catalyzes the condensation of carbamoyl phosphate and aspartate to form carbamoyl aspartate and inorganic phosphate, the committed step in the de novo pyrimidine nucleotide biosynthesis pathway. The sequence is that of Aspartate carbamoyltransferase catalytic subunit from Coxiella burnetii (strain CbuK_Q154) (Coxiella burnetii (strain Q154)).